Here is a 345-residue protein sequence, read N- to C-terminus: N-acetyl-gamma-glutamyl-phosphate reductase (345 aa).

Cysteine 142 is an active-site residue.

This sequence belongs to the NAGSA dehydrogenase family. Type 1 subfamily.

It localises to the cytoplasm. The enzyme catalyses N-acetyl-L-glutamate 5-semialdehyde + phosphate + NADP(+) = N-acetyl-L-glutamyl 5-phosphate + NADPH + H(+). The protein operates within amino-acid biosynthesis; L-arginine biosynthesis; N(2)-acetyl-L-ornithine from L-glutamate: step 3/4. Its function is as follows. Catalyzes the NADPH-dependent reduction of N-acetyl-5-glutamyl phosphate to yield N-acetyl-L-glutamate 5-semialdehyde. The chain is N-acetyl-gamma-glutamyl-phosphate reductase from Thermus thermophilus (strain ATCC BAA-163 / DSM 7039 / HB27).